A 531-amino-acid polypeptide reads, in one-letter code: Poly(A)-specific ribonuclease PNLDC1 (531 aa).

Mg(2+) contacts are provided by Asp28, Glu30, Asp271, and Asp365. A helical transmembrane segment spans residues 506 to 526 (ITCLLQVCSIVTTWAMIAFLL).

Belongs to the CAF1 family. Mg(2+) serves as cofactor. Specifically expressed in embryonic stem cells. Highly expressed in testis.

It localises to the endoplasmic reticulum membrane. The catalysed reaction is Exonucleolytic cleavage of poly(A) to 5'-AMP.. In terms of biological role, 3'-exoribonuclease that has a preference for poly(A) tails of mRNAs, thereby efficiently degrading poly(A) tails. Exonucleolytic degradation of the poly(A) tail is often the first step in the decay of eukaryotic mRNAs and is also used to silence certain maternal mRNAs translationally during oocyte maturation and early embryonic development. May act as a regulator of multipotency in embryonic stem cells. Is a critical factor for proper spermatogenesis, involved in pre-piRNAs processing to generate mature piRNAs. The polypeptide is Poly(A)-specific ribonuclease PNLDC1 (Mus musculus (Mouse)).